A 504-amino-acid chain; its full sequence is Protoporphyrinogen oxidase, mitochondrial (504 aa).

FAD is bound by residues 20-25 (GAGVSG), 43-44 (EA), Lys51, and 65-68 (GANT). The interval 213–232 (SPKNEKKQGPPKTSANKKRQ) is disordered. FAD is bound by residues Val264 and 473–475 (LSV).

The protein belongs to the protoporphyrinogen/coproporphyrinogen oxidase family. Protoporphyrinogen oxidase subfamily. FAD serves as cofactor.

Its subcellular location is the mitochondrion. It catalyses the reaction protoporphyrinogen IX + 3 O2 = protoporphyrin IX + 3 H2O2. It participates in porphyrin-containing compound metabolism; protoporphyrin-IX biosynthesis; protoporphyrin-IX from protoporphyrinogen-IX: step 1/1. With respect to regulation, inhibited by the herbicide acifluorfen. Its function is as follows. Catalyzes the 6-electron oxidation of protoporphyrinogen-IX to form protoporphyrin-IX. Provides precursor for the mitochondrial and plastidic heme synthesis and the predominant chlorophyll synthesis in plastids. The sequence is that of Protoporphyrinogen oxidase, mitochondrial (PPXII) from Nicotiana tabacum (Common tobacco).